The following is a 149-amino-acid chain: MERTFLMVKPDGVQRGLIGEVITRFERRGFKMVASRFEKLPDARVMEHYAEHVQKPFFPGLKAYITSGPCFLMVWEGKDIVKISRDMIGATNPAGAAPGTIRGDYALEIGMNVIHGSDSVETANREIAIHFKPEELVSYTRIDEQYLYE.

The ATP site is built by Lys9, Phe57, Arg85, Thr91, Arg102, and Asn112. His115 functions as the Pros-phosphohistidine intermediate in the catalytic mechanism.

The protein belongs to the NDK family. Mg(2+) serves as cofactor.

Its subcellular location is the cytoplasm. It carries out the reaction a 2'-deoxyribonucleoside 5'-diphosphate + ATP = a 2'-deoxyribonucleoside 5'-triphosphate + ADP. The catalysed reaction is a ribonucleoside 5'-diphosphate + ATP = a ribonucleoside 5'-triphosphate + ADP. Its function is as follows. Major role in the synthesis of nucleoside triphosphates other than ATP. The ATP gamma phosphate is transferred to the NDP beta phosphate via a ping-pong mechanism, using a phosphorylated active-site intermediate. The protein is Nucleoside diphosphate kinase of Methanospirillum hungatei JF-1 (strain ATCC 27890 / DSM 864 / NBRC 100397 / JF-1).